The sequence spans 505 residues: Katanin p60 ATPase-containing subunit A-like 2 (505 aa).

The 33-residue stretch at 25-57 folds into the LisH domain; sequence RRKNLLILIMHYLLQEGYVDSANSLEQETKISS. Disordered stretches follow at residues 94 to 127 and 140 to 167; these read LDHDSRVQPKPRSAGKLRRAGSNSTQGLPRIGQQ and RTNGHQKALSRENSKQESGGNSPQEASE. Composition is skewed to polar residues over residues 114-127 and 155-164; these read GSNSTQGLPRIGQQ and QESGGNSPQE. 298 to 305 contacts ATP; the sequence is GPPGTGKT.

Belongs to the AAA ATPase family. Katanin p60 subunit A1 subfamily. A-like 2 sub-subfamily.

It is found in the cytoplasm. The protein resides in the cytoskeleton. The protein localises to the spindle. Its subcellular location is the spindle pole. The catalysed reaction is n ATP + n H2O + a microtubule = n ADP + n phosphate + (n+1) alpha/beta tubulin heterodimers.. In terms of biological role, severs microtubules in vitro in an ATP-dependent manner. This activity may promote rapid reorganization of cellular microtubule arrays. This chain is Katanin p60 ATPase-containing subunit A-like 2 (katnal2), found in Xenopus laevis (African clawed frog).